Reading from the N-terminus, the 478-residue chain is Secretogranin-3 (478 aa).

Residues 1–21 form the signal peptide; the sequence is MASKRLGFVVVLALVCQHINA. Disordered regions lie at residues 22-126 and 208-287; these read FPTP…NGMD and IGDR…EDGL. A compositionally biased stretch (basic and acidic residues) spans 28–42; that stretch reads PDDKYNRELTEEKPL. The segment covering 63 to 74 has biased composition (acidic residues); that stretch reads AEEETNSEDDDI. Over residues 97–120 the composition is skewed to basic and acidic residues; it reads ANERLGADDTDSTKNRRLADDYDS. The span at 235–259 shows a compositional bias: acidic residues; sequence DEEDEVENEGGDDANGDEPQEEESR.

It is found in the cytoplasmic vesicle. The protein resides in the secretory vesicle lumen. The protein localises to the secretory vesicle membrane. Its subcellular location is the secreted. The chain is Secretogranin-3 (scg3) from Danio rerio (Zebrafish).